The sequence spans 195 residues: Molybdenum cofactor guanylyltransferase (195 aa).

GTP is bound by residues 10–12, Lys-23, Asn-51, Asp-69, and Asp-99; that span reads LAG. Position 99 (Asp-99) interacts with Mg(2+).

It belongs to the MobA family. Monomer. The cofactor is Mg(2+).

It is found in the cytoplasm. It carries out the reaction Mo-molybdopterin + GTP + H(+) = Mo-molybdopterin guanine dinucleotide + diphosphate. Functionally, transfers a GMP moiety from GTP to Mo-molybdopterin (Mo-MPT) cofactor (Moco or molybdenum cofactor) to form Mo-molybdopterin guanine dinucleotide (Mo-MGD) cofactor. In Histophilus somni (strain 129Pt) (Haemophilus somnus), this protein is Molybdenum cofactor guanylyltransferase.